A 1072-amino-acid polypeptide reads, in one-letter code: Carbamoyl phosphate synthase large chain (1072 aa).

Residues M1–E401 are carboxyphosphate synthetic domain. R129, R169, G175, G176, K208, L210, E215, G241, V242, H243, Q284, and E298 together coordinate ATP. The 195-residue stretch at K133–I327 folds into the ATP-grasp 1 domain. Residues Q284, E298, and N300 each coordinate Mg(2+). Mn(2+) is bound by residues Q284, E298, and N300. The tract at residues I402–D544 is oligomerization domain. The segment at E545–G929 is carbamoyl phosphate synthetic domain. Residues S671–L861 enclose the ATP-grasp 2 domain. Residues R707, K746, I748, E752, G777, V778, H779, S780, Q820, and E832 each contribute to the ATP site. Positions 820, 832, and 834 each coordinate Mg(2+). Q820, E832, and N834 together coordinate Mn(2+). The MGS-like domain maps to L930–L1072. Positions L930–L1072 are allosteric domain.

It belongs to the CarB family. Composed of two chains; the small (or glutamine) chain promotes the hydrolysis of glutamine to ammonia, which is used by the large (or ammonia) chain to synthesize carbamoyl phosphate. Tetramer of heterodimers (alpha,beta)4. Mg(2+) serves as cofactor. Requires Mn(2+) as cofactor.

The enzyme catalyses hydrogencarbonate + L-glutamine + 2 ATP + H2O = carbamoyl phosphate + L-glutamate + 2 ADP + phosphate + 2 H(+). It catalyses the reaction hydrogencarbonate + NH4(+) + 2 ATP = carbamoyl phosphate + 2 ADP + phosphate + 2 H(+). It functions in the pathway amino-acid biosynthesis; L-arginine biosynthesis; carbamoyl phosphate from bicarbonate: step 1/1. The protein operates within pyrimidine metabolism; UMP biosynthesis via de novo pathway; (S)-dihydroorotate from bicarbonate: step 1/3. Functionally, large subunit of the glutamine-dependent carbamoyl phosphate synthetase (CPSase). CPSase catalyzes the formation of carbamoyl phosphate from the ammonia moiety of glutamine, carbonate, and phosphate donated by ATP, constituting the first step of 2 biosynthetic pathways, one leading to arginine and/or urea and the other to pyrimidine nucleotides. The large subunit (synthetase) binds the substrates ammonia (free or transferred from glutamine from the small subunit), hydrogencarbonate and ATP and carries out an ATP-coupled ligase reaction, activating hydrogencarbonate by forming carboxy phosphate which reacts with ammonia to form carbamoyl phosphate. The polypeptide is Carbamoyl phosphate synthase large chain (Thermoanaerobacter pseudethanolicus (strain ATCC 33223 / 39E) (Clostridium thermohydrosulfuricum)).